Consider the following 401-residue polypeptide: Dual specificity mitogen-activated protein kinase kinase 2 (401 aa).

Met1 is subject to N-acetylmethionine. Ser23 bears the Phosphoserine mark. In terms of domain architecture, Protein kinase spans 72 to 370 (FERISELGAG…LKLLMNHAFI (299 aa)). Residues 78 to 86 (LGAGNGGVV) and Lys101 each bind ATP. The active-site Proton acceptor is Asp194. A phosphoserine; by RAF mark is found at Ser222 and Ser226. A disordered region spans residues 282-310 (PVVDGADGEPHSVSPRPRPPGRPISVGHG). A phosphoserine mark is found at Ser293, Ser295, and Ser306. A phosphothreonine mark is found at Thr395 and Thr397.

It belongs to the protein kinase superfamily. STE Ser/Thr protein kinase family. MAP kinase kinase subfamily. In terms of assembly, interacts with MORG1. Interacts with SGK1. Interacts with KSR1. Interacts with KSR1 and BRAF; the interaction with KSR1 mediates KSR1-BRAF dimerization. Interacts with GLS. It depends on Mg(2+) as a cofactor. In terms of processing, phosphorylation on Ser/Thr by MAP kinase kinase kinases (RAF or MEKK1) positively regulates the kinase activity. Phosphorylated by MAP2K1/MEK1. Low levels of autophosphorylation have been observed. Expressed in adult intestine, kidney, liver, lung, pancreas, spleen, thymus, and at high levels in the neonatal brain. Lower expression is found in adult brain and heart.

It localises to the cytoplasm. Its subcellular location is the membrane. It catalyses the reaction L-seryl-[protein] + ATP = O-phospho-L-seryl-[protein] + ADP + H(+). The enzyme catalyses L-threonyl-[protein] + ATP = O-phospho-L-threonyl-[protein] + ADP + H(+). The catalysed reaction is L-tyrosyl-[protein] + ATP = O-phospho-L-tyrosyl-[protein] + ADP + H(+). Its activity is regulated as follows. Inhibited by serine/threonine phosphatase 2A. Catalyzes the concomitant phosphorylation of a threonine and a tyrosine residue in a Thr-Glu-Tyr sequence located in MAP kinases. Activates the ERK1 and ERK2 MAP kinases. Activates BRAF in a KSR1 or KSR2-dependent manner; by binding to KSR1 or KSR2 releases the inhibitory intramolecular interaction between KSR1 or KSR2 protein kinase and N-terminal domains which promotes KSR1 or KSR2-BRAF dimerization and BRAF activation. The polypeptide is Dual specificity mitogen-activated protein kinase kinase 2 (Map2k2) (Mus musculus (Mouse)).